A 614-amino-acid chain; its full sequence is Afadin- and alpha-actinin-binding protein (614 aa).

2 coiled-coil regions span residues 131 to 227 (MDHL…IAMD) and 266 to 293 (RQKQILMENAELKKVLQQMKKEMISLLS). Ser290, Ser293, and Ser312 each carry phosphoserine. Residues 292–317 (LSPQKKKPRERVDDSTGTVISDVEED) form a disordered region. A coiled-coil region spans residues 374-460 (ISRQDHEQET…RSFTEAAIRL (87 aa)). Phosphoserine is present on residues Ser536, Ser540, and Ser542.

The protein belongs to the ADIP family. In terms of assembly, interacts with afadin and alpha-actinin. Interacts with VAV2. Interacts with SSX2 and SSX3. Does not interact with SSX1 and SSX4. Interacts with PCM1. Interacts with WRAP73. As to expression, widely expressed, with the highest expression in brain, intermediate expression in kidney, testis, spinal cord, liver, heart, lung, skeletal muscle, ovary, fetal liver and fetal brain, and little to no expression in pancreas and spleen. All specific brain regions showed intermediate to high expression, with highest expression in amygdala. Also expressed in fetal tissues, mainly in liver and brain.

The protein localises to the cell junction. Its subcellular location is the adherens junction. The protein resides in the nucleus. It is found in the cytoplasm. It localises to the cytoskeleton. The protein localises to the microtubule organizing center. Its subcellular location is the centrosome. The protein resides in the centriolar satellite. It is found in the cilium basal body. Its function is as follows. Belongs to an adhesion system, which plays a role in the organization of homotypic, interneuronal and heterotypic cell-cell adherens junctions (AJs). May connect the nectin-afadin and E-cadherin-catenin system through alpha-actinin and may be involved in organization of the actin cytoskeleton at AJs through afadin and alpha-actinin. Involved in cell movement: localizes at the leading edge of moving cells in response to PDGF and is required for the formation of the leading edge and the promotion of cell movement, possibly via activation of Rac signaling. Acts as a centrosome maturation factor, probably by maintaining the integrity of the pericentriolar material and proper microtubule nucleation at mitotic spindle poles. The function seems to implicate at least in part WRAP73; the SSX2IP:WRAP73 complex is proposed to act as regulator of spindle anchoring at the mitotic centrosome. Involved in ciliogenesis. It is required for targeted recruitment of the BBSome, CEP290, RAB8, and SSTR3 to the cilia. This is Afadin- and alpha-actinin-binding protein (SSX2IP) from Homo sapiens (Human).